The sequence spans 155 residues: Small ribosomal subunit protein uS7c (155 aa).

This sequence belongs to the universal ribosomal protein uS7 family. Part of the 30S ribosomal subunit.

Its subcellular location is the plastid. The protein resides in the chloroplast. Functionally, one of the primary rRNA binding proteins, it binds directly to 16S rRNA where it nucleates assembly of the head domain of the 30S subunit. In Silene latifolia (White campion), this protein is Small ribosomal subunit protein uS7c (rps7).